The following is a 654-amino-acid chain: Biotin-dependent 3-methylcrotonyl-coenzyme A carboxylase alpha1 subunit (654 aa).

Positions 1-448 (MFDTVLVANR…DTAVLDERSA (448 aa)) constitute a Biotin carboxylation domain. The region spanning 120–319 (KNAVAAFDVP…LVEWQLRVGA (200 aa)) is the ATP-grasp domain. 148–209 (AAEVGYPVLI…ERFVLRPRHI (62 aa)) is a binding site for ATP. E275, E290, and N292 together coordinate Mg(2+). Mn(2+)-binding residues include E275, E290, and N292. Positions 578–653 (HRAVGARPAE…KVEQVLARIK (76 aa)) constitute a Biotinyl-binding domain. K620 carries the N6-biotinyllysine modification.

As to quaternary structure, the biotin-dependent acyl-CoA carboxylase complex is composed of AccA1, which contains the biotin carboxylase (BC) and biotin carboxyl carrier protein (BCCP) domains, and AccD1, which contains the carboxyl transferase (CT) domain. The AccA1/AccD1 complex forms a dodecamer. Mg(2+) serves as cofactor. Requires Mn(2+) as cofactor. It depends on biotin as a cofactor.

The catalysed reaction is N(6)-biotinyl-L-lysyl-[protein] + hydrogencarbonate + ATP = N(6)-carboxybiotinyl-L-lysyl-[protein] + ADP + phosphate + H(+). Its pathway is amino-acid degradation; L-leucine degradation. Functionally, component of a biotin-dependent acyl-CoA carboxylase complex. This subunit catalyzes the ATP-dependent carboxylation of the biotin carried by the biotin carboxyl carrier (BCC) domain, resulting in the formation of carboxyl biotin. When associated with the beta1 subunit AccD1, is involved in branched amino-acid catabolism with methylcrotonyl coenzyme A as the substrate. This Mycobacterium bovis (strain ATCC BAA-935 / AF2122/97) protein is Biotin-dependent 3-methylcrotonyl-coenzyme A carboxylase alpha1 subunit (accA1).